Here is a 375-residue protein sequence, read N- to C-terminus: RING-H2 finger protein ATL16 (375 aa).

Positions 1–20 (MDLSNRRNPLRDLSFPPPPP) are disordered. The helical transmembrane segment at 39 to 59 (VAVIGILATAFLLVSYYVFVI) threads the bilayer. Residues 138–180 (CSVCLSEFQDEEKLRIIPNCSHLFHIDCIDVWLQNNANCPLCR) form an RING-type; atypical zinc finger. 2 disordered regions span residues 223–266 (GSDR…DRGG) and 356–375 (SFGS…YFEP). Positions 238 to 257 (QERSNSGYLLNENTQNSISP) are enriched in polar residues.

It belongs to the RING-type zinc finger family. ATL subfamily.

The protein localises to the membrane. It carries out the reaction S-ubiquitinyl-[E2 ubiquitin-conjugating enzyme]-L-cysteine + [acceptor protein]-L-lysine = [E2 ubiquitin-conjugating enzyme]-L-cysteine + N(6)-ubiquitinyl-[acceptor protein]-L-lysine.. Its pathway is protein modification; protein ubiquitination. The protein is RING-H2 finger protein ATL16 (ATL16) of Arabidopsis thaliana (Mouse-ear cress).